The primary structure comprises 327 residues: GMP reductase (327 aa).

C176 (thioimidate intermediate) is an active-site residue. 205-228 contributes to the NADP(+) binding site; the sequence is IIADGGIRTHGDIAKSIRFGASMV.

The protein belongs to the IMPDH/GMPR family. GuaC type 2 subfamily.

The enzyme catalyses IMP + NH4(+) + NADP(+) = GMP + NADPH + 2 H(+). Its function is as follows. Catalyzes the irreversible NADPH-dependent deamination of GMP to IMP. It functions in the conversion of nucleobase, nucleoside and nucleotide derivatives of G to A nucleotides, and in maintaining the intracellular balance of A and G nucleotides. The sequence is that of GMP reductase from Streptococcus agalactiae serotype Ia (strain ATCC 27591 / A909 / CDC SS700).